A 472-amino-acid polypeptide reads, in one-letter code: Eukaryotic translation initiation factor 2 subunit 3, X-linked (472 aa).

Alanine 2 is modified (N-acetylalanine). The residue at position 16 (serine 16) is a Phosphoserine. In terms of domain architecture, tr-type G spans glutamine 39 to arginine 248. Residues glycine 48–serine 55 are G1. Alanine 51–threonine 56 is a GTP binding site. The tract at residues asparagine 76–lysine 80 is G2. The tract at residues aspartate 134–glycine 137 is G3. GTP-binding positions include asparagine 190–aspartate 193 and serine 225–glutamine 227. A G4 region spans residues asparagine 190 to aspartate 193. Positions serine 225–glutamine 227 are G5. Residues glycine 457–valine 469 form an interacts with Cdc123 region.

Belongs to the TRAFAC class translation factor GTPase superfamily. Classic translation factor GTPase family. EIF2G subfamily. In terms of assembly, eukaryotic translation initiation factor 2 eIF2 is a heterotrimeric complex composed of an alpha (EIF2S1), a beta (EIF2S2) and a gamma (EIF2S3) chain. eIF2 is member of the 43S pre-initiation complex (43S PIC). Interacts (via C-terminus) with CDC123; the interaction is direct. Widely expressed. In the brain, high mRNA levels are observed in specific regions, including the habenula, anterodorsal thalamic nucleus, hippocampus, hypothalamus, and cerebellum. Also expressed in the embryonic brain. There is a differential expression between males and females, which is tissue-specific. Females tend to have higher expression levels than males in the brain (cortex, hippocampus and paraventricular nucleus, but not in the habenula), as well as in other tissues. The up-regulation observed in females at the mRNA level may be due to the presence of 2 active copies of the gene.

The protein resides in the cytoplasm. Its subcellular location is the cytosol. The catalysed reaction is GTP + H2O = GDP + phosphate + H(+). Member of the eIF2 complex that functions in the early steps of protein synthesis by forming a ternary complex with GTP and initiator tRNA. This complex binds to a 40S ribosomal subunit, followed by mRNA binding to form the 43S pre-initiation complex (43S PIC). Junction of the 60S ribosomal subunit to form the 80S initiation complex is preceded by hydrolysis of the GTP bound to eIF2 and release of an eIF2-GDP binary complex. In order for eIF2 to recycle and catalyze another round of initiation, the GDP bound to eIF2 must exchange with GTP by way of a reaction catalyzed by eIF-2B. Along with its paralog on chromosome Y, may contribute to spermatogenesis up to the round spermatid stage. The polypeptide is Eukaryotic translation initiation factor 2 subunit 3, X-linked (Eif2s3x) (Mus musculus (Mouse)).